Here is a 1316-residue protein sequence, read N- to C-terminus: MEKYHVLEMIGEGSFGRVYKGRKKYSAQVVALKFIPKLGRSEKELRNLQREIEIMRGLWHPNIVHMLDSFETDKEVVVVTDYAEGELFQILEDDGKLPEDQVQAIAAQLVSALYYLHSHRILHRDMKPQNILLAKGGGIKLCDFGFARAMSTNTMVLTSIKGTPLYMSPELVEERPYDHTADLWSVGCILYELAVGTPPFYTTSIFQLVSLILKDPVRWPSTISSCFKNFLQGLLTKDPRQRLSWPDLLHHPFIAGRVTIITEPAGSDLGTPFTSRLPPELQVLKDEQAHRLAPKGNQSRILRQACKLMAEEAKQKEDQNAGSALEQEDGLCKVTPSTAPVPGLKATPQESSLLAGILASEMKNNWEDWGAGEAPRTSRENHINLECEQGFPEPRPEAMGRQSTDVVDPENEEPDSDDEWQRLLETSEPGPVQLKSPLTLLCNPDFCQRIQSQLRGTGEQILKGVLDGVSHLLPVLRILSSLLSSCNDSVLLYSFCQEAGLPELPLSLLRYSQESSSIQQQPWYGALLRDLVAVVQAYFSCTFNLERSQTGDSLQVFQEAASLFLDLLGKLLAQSDDSEQTFRRDSLMCFAVLCEAVDGNSWAVSKAFYSSLLTTQRAVLDGLLHGLTVPQLPFHTPPGAPQVSQPLREQSEDVPGAISSALAAMCTAPVGLPSCWDAKEQVSWHLANQLTEDSSQLRPSLISGLRHHVLCLHLLKVLYACCYISERLCHILGQEPLALESLLMLVQGKVKVADWEESTEVALYLLSLLVFRLQDLPSGMEKLGSEVATLFTHSHVVSLVNAAACLLGQLGQQGVTFDLQPREWIAAAAHALSAPAEVRLTPPYSCGFYDGLLILLLQLLMQVQGKPGLIRDVVGSEVWTILWHRFSMALRLPEEVSAQEDDLLLSSPSSLEPDWTLISPQGMAALLSLAMAIFTQESQLCLSHLSQHGSVLMLTLKHLLSPSFLHHLSQAPQGPEFLPVVVLSVCKLLCFPFALDVDADLLVGVLADLRASEVVVCLLQVCCHHLSLLQAELPIGLLTRLALTDSASLKQFVNTVATSSRAIISFLSVVLLSDQPLMISDLLSLLTHTARILSPSHLSFIQELLSGSDESYRPLRSLLGHSENTVRVRAYGLLGHLLQHSMALRGALQSQSGLLNLLLLGLGDKDPAVRRSASFAVGNAAYQAGPLGPALAAAVPSMTQLLGDAQDGIRRNAASALGNLGPEGLGKELLKCQVPQRLLEMACGDPQPTVKEAALIALRSLQQESCIHQVLVSLGASEKLALLSLGNQLLPNSSNRPASVRHCRKLIQLLRPTHST.

The Protein kinase domain occupies 4-254 (YHVLEMIGEG…WPDLLHHPFI (251 aa)). Residues 10–18 (IGEGSFGRV) and Lys-33 each bind ATP. The Proton acceptor role is filled by Asp-125. Residues 389–418 (QGFPEPRPEAMGRQSTDVVDPENEEPDSDD) form a disordered region. Positions 407 to 418 (VDPENEEPDSDD) are enriched in acidic residues.

Belongs to the protein kinase superfamily. Ser/Thr protein kinase family. In terms of assembly, interacts with SPAG16 and KIF27. Mg(2+) is required as a cofactor. As to expression, weakly expressed in the heart and thymus, present at moderate to high levels in the lungs, pancreas, and kidneys and at higher levels in the brain and cerebellum. Very highly expressed in the testis.

It localises to the cytoplasm. Its subcellular location is the nucleus. It is found in the cytoskeleton. The protein localises to the cilium axoneme. The catalysed reaction is L-seryl-[protein] + ATP = O-phospho-L-seryl-[protein] + ADP + H(+). The enzyme catalyses L-threonyl-[protein] + ATP = O-phospho-L-threonyl-[protein] + ADP + H(+). In terms of biological role, serine/threonine protein kinase which plays an important role in the sonic hedgehog (Shh) pathway by regulating the activity of GLI transcription factors. Controls the activity of the transcriptional regulators GLI1, GLI2 and GLI3 by opposing the effect of SUFU and promoting their nuclear localization. GLI2 requires an additional function of STK36 to become transcriptionally active, but the enzyme does not need to possess an active kinase catalytic site for this to occur. Required for postnatal development, possibly by regulating the homeostasis of cerebral spinal fluid or ciliary function. Essential for construction of the central pair apparatus of motile cilia. The protein is Serine/threonine-protein kinase 36 of Mus musculus (Mouse).